We begin with the raw amino-acid sequence, 1169 residues long: Chromosome partition protein Smc (1169 aa).

32-39 (PNGSGKSN) lines the ATP pocket. Residues 166–507 (DEISGIAEFD…RIKALKEMEE (342 aa)) adopt a coiled-coil conformation. Residues 523-636 (PGIIDIVGNL…ENIDIAKELA (114 aa)) enclose the SMC hinge domain. The stretch at 676–1030 (SKLNKIADEI…NKKKEVFMEV (355 aa)) forms a coiled coil.

Belongs to the SMC family. In terms of assembly, homodimer.

It localises to the cytoplasm. Functionally, required for chromosome condensation and partitioning. This is Chromosome partition protein Smc from Methanocaldococcus jannaschii (strain ATCC 43067 / DSM 2661 / JAL-1 / JCM 10045 / NBRC 100440) (Methanococcus jannaschii).